The following is a 1085-amino-acid chain: Carbamoyl phosphate synthase large chain (1085 aa).

Residues M1–E399 are carboxyphosphate synthetic domain. Residues R127, R167, G174, E206, L208, E213, G239, V240, H241, Q283, and E297 each contribute to the ATP site. The ATP-grasp 1 domain occupies K131–V326. Mg(2+) contacts are provided by Q283, E297, and N299. Positions 283, 297, and 299 each coordinate Mn(2+). Residues N400–N552 are oligomerization domain. Residues K553 to F951 form a carbamoyl phosphate synthetic domain region. The ATP-grasp 2 domain maps to S678 to V871. 10 residues coordinate ATP: R714, K756, L758, E763, G788, I789, H790, S791, Q830, and E842. Positions 830, 842, and 844 each coordinate Mg(2+). Q830, E842, and N844 together coordinate Mn(2+). The region spanning N952 to K1085 is the MGS-like domain. Residues N952–K1085 are allosteric domain.

The protein belongs to the CarB family. In terms of assembly, composed of two chains; the small (or glutamine) chain promotes the hydrolysis of glutamine to ammonia, which is used by the large (or ammonia) chain to synthesize carbamoyl phosphate. Tetramer of heterodimers (alpha,beta)4. Mg(2+) serves as cofactor. It depends on Mn(2+) as a cofactor.

It carries out the reaction hydrogencarbonate + L-glutamine + 2 ATP + H2O = carbamoyl phosphate + L-glutamate + 2 ADP + phosphate + 2 H(+). It catalyses the reaction hydrogencarbonate + NH4(+) + 2 ATP = carbamoyl phosphate + 2 ADP + phosphate + 2 H(+). Its pathway is amino-acid biosynthesis; L-arginine biosynthesis; carbamoyl phosphate from bicarbonate: step 1/1. It functions in the pathway pyrimidine metabolism; UMP biosynthesis via de novo pathway; (S)-dihydroorotate from bicarbonate: step 1/3. In terms of biological role, large subunit of the glutamine-dependent carbamoyl phosphate synthetase (CPSase). CPSase catalyzes the formation of carbamoyl phosphate from the ammonia moiety of glutamine, carbonate, and phosphate donated by ATP, constituting the first step of 2 biosynthetic pathways, one leading to arginine and/or urea and the other to pyrimidine nucleotides. The large subunit (synthetase) binds the substrates ammonia (free or transferred from glutamine from the small subunit), hydrogencarbonate and ATP and carries out an ATP-coupled ligase reaction, activating hydrogencarbonate by forming carboxy phosphate which reacts with ammonia to form carbamoyl phosphate. The protein is Carbamoyl phosphate synthase large chain of Helicobacter pylori (strain ATCC 700392 / 26695) (Campylobacter pylori).